The following is a 139-amino-acid chain: D-ribose pyranase (139 aa).

The active-site Proton donor is the His20. Residues Asp28, His106, and 128 to 130 contribute to the substrate site; that span reads YAN.

This sequence belongs to the RbsD / FucU family. RbsD subfamily. Homodecamer.

It is found in the cytoplasm. The catalysed reaction is beta-D-ribopyranose = beta-D-ribofuranose. It functions in the pathway carbohydrate metabolism; D-ribose degradation; D-ribose 5-phosphate from beta-D-ribopyranose: step 1/2. In terms of biological role, catalyzes the interconversion of beta-pyran and beta-furan forms of D-ribose. The protein is D-ribose pyranase of Vibrio vulnificus (strain CMCP6).